A 261-amino-acid chain; its full sequence is Putative [LysW]-aminoadipate/[LysW]-glutamate kinase (261 aa).

Residues 35–36 (GG), R62, and N162 contribute to the substrate site.

The protein belongs to the acetylglutamate kinase family. LysZ subfamily.

Its subcellular location is the cytoplasm. It carries out the reaction [amino-group carrier protein]-C-terminal-N-(1,4-dicarboxybutan-1-yl)-L-glutamine + ATP = [amino-group carrier protein]-C-terminal-N-(1-carboxy-5-phosphooxy-5-oxopentan-1-yl)-L-glutamine + ADP. It catalyses the reaction [amino-group carrier protein]-C-terminal-gamma-(L-glutamyl)-L-glutamate + ATP = [amino-group carrier protein]-C-terminal-gamma-(5-phospho-L-glutamyl)-L-glutamate + ADP. Its pathway is amino-acid biosynthesis; L-lysine biosynthesis via AAA pathway; L-lysine from L-alpha-aminoadipate (Thermus route): step 2/5. The protein operates within amino-acid biosynthesis; L-arginine biosynthesis. Its function is as follows. Involved in both the arginine and lysine biosynthetic pathways. Phosphorylates the LysW-bound precursors glutamate (for arginine biosynthesis), respectively alpha-aminoadipate (for lysine biosynthesis). This chain is Putative [LysW]-aminoadipate/[LysW]-glutamate kinase, found in Pyrobaculum calidifontis (strain DSM 21063 / JCM 11548 / VA1).